The sequence spans 254 residues: Triosephosphate isomerase (254 aa).

A substrate-binding site is contributed by 9-11; it reads NWK. His96 acts as the Electrophile in catalysis. The active-site Proton acceptor is the Glu169. Substrate contacts are provided by residues Gly175, Ser215, and 236 to 237; that span reads GG.

This sequence belongs to the triosephosphate isomerase family. In terms of assembly, homodimer.

Its subcellular location is the cytoplasm. It catalyses the reaction D-glyceraldehyde 3-phosphate = dihydroxyacetone phosphate. Its pathway is carbohydrate biosynthesis; gluconeogenesis. The protein operates within carbohydrate degradation; glycolysis; D-glyceraldehyde 3-phosphate from glycerone phosphate: step 1/1. Involved in the gluconeogenesis. Catalyzes stereospecifically the conversion of dihydroxyacetone phosphate (DHAP) to D-glyceraldehyde-3-phosphate (G3P). The protein is Triosephosphate isomerase of Borrelia duttonii (strain Ly).